Reading from the N-terminus, the 373-residue chain is tRNA/tmRNA (uracil-C(5))-methyltransferase (373 aa).

The S-adenosyl-L-methionine site is built by Gln-190, Tyr-219, Asn-224, Glu-240, and Asp-300. Residue Cys-325 is the Nucleophile of the active site. Glu-359 acts as the Proton acceptor in catalysis.

It belongs to the class I-like SAM-binding methyltransferase superfamily. RNA M5U methyltransferase family. TrmA subfamily.

The catalysed reaction is uridine(54) in tRNA + S-adenosyl-L-methionine = 5-methyluridine(54) in tRNA + S-adenosyl-L-homocysteine + H(+). It carries out the reaction uridine(341) in tmRNA + S-adenosyl-L-methionine = 5-methyluridine(341) in tmRNA + S-adenosyl-L-homocysteine + H(+). In terms of biological role, dual-specificity methyltransferase that catalyzes the formation of 5-methyluridine at position 54 (m5U54) in all tRNAs, and that of position 341 (m5U341) in tmRNA (transfer-mRNA). This is tRNA/tmRNA (uracil-C(5))-methyltransferase from Chromohalobacter salexigens (strain ATCC BAA-138 / DSM 3043 / CIP 106854 / NCIMB 13768 / 1H11).